Here is a 136-residue protein sequence, read N- to C-terminus: UPF0216 protein PF0452 (136 aa).

This sequence belongs to the UPF0216 family.

In Pyrococcus furiosus (strain ATCC 43587 / DSM 3638 / JCM 8422 / Vc1), this protein is UPF0216 protein PF0452.